A 264-amino-acid polypeptide reads, in one-letter code: MQTVNTQPHRIFRVLLPAVFSSLLLSSLTVSAASSSNDADKLYFGNNKYYLFNNVWGKDEIKGWQQTIFYNSPISMGWNWHWPSSTHSVKAYPSLVSGWHWTAGYTENSGLPIQLSSNKSITSNVTYSIKATGTYNAAYDIWFHTTDKANWDSSPTDELMIWLNDTNAGPAGDYIETVFLGDSSWNVFKGWINADNGGGWNVFSFVHTSGTNSASLNIRHFTDYLVQTKQWMSDEKYISSVEFGTEIFGGDGQIDITEWRVDVK.

A signal peptide spans 1–32; sequence MQTVNTQPHRIFRVLLPAVFSSLLLSSLTVSA.

Belongs to the glycosyl hydrolase 12 (cellulase H) family.

It carries out the reaction Endohydrolysis of (1-&gt;4)-beta-D-glucosidic linkages in cellulose, lichenin and cereal beta-D-glucans.. This Pectobacterium parmentieri protein is Endoglucanase S (celS).